The chain runs to 385 residues: Probable caffeine synthase MTL2 (385 aa).

S-adenosyl-L-homocysteine contacts are provided by Y18, C62, N67, D101, L102, S140, F141, and C157. Caffeine is bound by residues Y158, H161, and W162. Position 179 (N179) interacts with Mg(2+). T238 provides a ligand contact to caffeine. Residues D261, F263, and N264 each coordinate Mg(2+). Position 369 (Y369) interacts with caffeine.

The protein belongs to the methyltransferase superfamily. Type-7 methyltransferase family. Requires Mg(2+) as cofactor.

It functions in the pathway alkaloid biosynthesis. In terms of biological role, may be involved in the biosynthesis of caffeine. This Coffea canephora (Robusta coffee) protein is Probable caffeine synthase MTL2.